Reading from the N-terminus, the 284-residue chain is 4-hydroxybenzoate octaprenyltransferase (284 aa).

7 helical membrane passes run 13-32 (FNRP…ALWL), 90-110 (ALML…FTDL), 112-132 (TILL…MKRY), 134-154 (HLPQ…AYSA), 164-184 (LWML…YYAM), 200-220 (ILFG…TLSL), and 224-244 (IGLL…CVGL).

Belongs to the UbiA prenyltransferase family. The cofactor is Mg(2+).

It localises to the cell inner membrane. The enzyme catalyses all-trans-octaprenyl diphosphate + 4-hydroxybenzoate = 4-hydroxy-3-(all-trans-octaprenyl)benzoate + diphosphate. The protein operates within cofactor biosynthesis; ubiquinone biosynthesis. Catalyzes the prenylation of para-hydroxybenzoate (PHB) with an all-trans polyprenyl group. Mediates the second step in the final reaction sequence of ubiquinone-8 (UQ-8) biosynthesis, which is the condensation of the polyisoprenoid side chain with PHB, generating the first membrane-bound Q intermediate 3-octaprenyl-4-hydroxybenzoate. This Marinomonas sp. (strain MWYL1) protein is 4-hydroxybenzoate octaprenyltransferase.